The chain runs to 206 residues: Imidazoleglycerol-phosphate dehydratase (206 aa).

This sequence belongs to the imidazoleglycerol-phosphate dehydratase family.

The protein resides in the cytoplasm. It catalyses the reaction D-erythro-1-(imidazol-4-yl)glycerol 3-phosphate = 3-(imidazol-4-yl)-2-oxopropyl phosphate + H2O. It functions in the pathway amino-acid biosynthesis; L-histidine biosynthesis; L-histidine from 5-phospho-alpha-D-ribose 1-diphosphate: step 6/9. The sequence is that of Imidazoleglycerol-phosphate dehydratase from Mycolicibacterium smegmatis (strain ATCC 700084 / mc(2)155) (Mycobacterium smegmatis).